We begin with the raw amino-acid sequence, 709 residues long: Rho guanine nucleotide exchange factor 16 (709 aa).

Ala2 carries the N-acetylalanine modification. Residues Ser6, Ser41, and Ser107 each carry the phosphoserine modification. The interval 22–70 (ELRLDAGGNPASGLPMVRGSPRVRDDAAFQPQVPAPPQPRPPGHEEPWP) is disordered. The disordered stretch occupies residues 114–146 (SREAARRDPKLLPAPSFSLDDMDVDKDPGGMLR). Phosphoserine occurs at positions 174, 191, and 208. A disordered region spans residues 180–246 (LAEEPSQPHT…ESSSPEGTQK (67 aa)). A compositionally biased stretch (basic residues) spans 191–207 (SPAKNKKTLGRKRGHKG). Thr226 is modified (phosphothreonine). 3 positions are modified to phosphoserine: Ser227, Ser230, and Ser240. Residues 275–481 (LDQLSTEERK…MERMEQMYTL (207 aa)) form a required for RHOG activation and mediates interaction with EPHA2 region. Residues 284–468 (KRQEAMFEIL…SKLVRQCNEG (185 aa)) enclose the DH domain. The PH domain occupies 501 to 620 (WLLKRGELFL…WIVALTHSER (120 aa)). The 61-residue stretch at 629-689 (GDLPQVEITK…PEDFARFITS (61 aa)) folds into the SH3 domain. The PDZ-binding motif motif lies at 707–709 (TDV).

In terms of assembly, interacts with ELMO2, EPHA2, RAC1 and RHOG; mediates activation of RAC1 by EPHA2. Interacts with TAX1BP3 (via PDZ domain). May interact with CDC42; stimulated by HPV16 E6.

The protein resides in the cytoplasm. In terms of biological role, guanyl-nucleotide exchange factor of the RHOG GTPase stimulating the exchange of RHOG-associated GDP for GTP. May play a role in chemotactic cell migration by mediating the activation of RAC1 by EPHA2. May also activate CDC42 and mediate activation of CDC42 by the viral protein HPV16 E6. This Homo sapiens (Human) protein is Rho guanine nucleotide exchange factor 16 (ARHGEF16).